The sequence spans 1398 residues: MKDLLNLLKNQGQVEEFDAIRIGLASPEMIRSWSFGEVKKPETINYRTFKPERDGLFCAKIFGPVKDYECLCGKYKRLKHRGVICEKCGVEVALGKVAAERMGHIELACGLAHIWFLKSLPSRIGLLMDMTLRDIERVLYFESYVVIDPGMTTLEKGQLLNDEQYFEALEEFGDDFDAAMGAEAVRELLHAIDLEHEIGPLREEIPQTNSETKIKKLSKRLKLMEAFQGIGNLPEWMVLTVLPVVPAPLGPLVPLDGGRFATSDLNDLYRRVINRNNRLKRQLDLSAPDIIVRNEKPMLQEAVEPLLDNGACGVAIIGSNKRPLKSLADMIKGKQGLFRQNLLGKRVDYSGRSVISVGPTLRLHQCGLPKKMALELFKPFIFGKLEMRGLATTIKAAKKMVERELPEVWDVLAEVIREHPVLLNRAPTLHRLGIQAFEPVLIEGKAIQLHPLVCARYNADFDGDQMAVDVPLTLEAQLENGALMMSTNNILSPANGEPIIVPSQDVVLGLYYMTREAINAKGEGRVFADLQEVDRVFRAGEAALHAKIKVRINETVKERDGSVVKNTRIVDTTVGRALLFQVVPGGLPYDVVNQPMKKKAISKLINQCYRVVGLKETVIFADQLMYTGFAYSTISGVSIGVNDFVIPDEKARIIGNATDEVKEIESQYASGLVTQGEKYNKVIDLWSKANDEVSKAMMANLSKEKVIDREGKEVEQESFNSMYMMADSGAGGSAAQIRQLAGMRGLMAKPDGSIIETPITANFREGLSVLQYFISTHGARKGLADTALKTANSGYLTRRLVDVAQDLVVTEIDCGTDQGLVMTPHIEGGDVVEPLGERVLGRVIARDVFKPGTEDVIVPAGTLVDEQWVEFIELNSIDEVIVRSPINCETRYGICAKCYGRDLARGHQVNIGEAVGVIAAQSIGEPGTQLTMRTFHIGGAASRTSAADSVQVKNGGMGASRNLKQVERADGNLVAVSRSGELAIADEFGRECEYKLPYGAVISVKEGEKVEAGAIVAKWDPHTHPIVTELKGTVTFVGMEENITIKRQTDELTGLTNIEVLDVKDRPAARRHTLRPAIKMVDAAGKDLYLPGTDVPAQYFLPANALVGVADGAQIGVGDVIARIPQETSKTRDITGGLPRVADLFEARRPKEASILAEVSGTIAFGKETKGKRRLVITPTDGSEPYEELIPKWRHLNVFEGEQVNRGEVISDGPSDPDDILRLLGVSALGKYIDNEIQDVYRLQGVKINDKHIETILRQMLRKVRISESGDSSFIKGDQMEYPGAGRERASASEDKFISKFTRVLLGITKASLSTESFISAASFQETTRVLTEAAVTGKRDYLRGLKENVVVGRLIPAGTGLAYHTERMARRDADKPLRVSASEVEAALTEALNSSGN.

Zn(2+) contacts are provided by cysteine 70, cysteine 72, cysteine 85, and cysteine 88. 3 residues coordinate Mg(2+): aspartate 460, aspartate 462, and aspartate 464. Zn(2+) is bound by residues cysteine 814, cysteine 888, cysteine 895, and cysteine 898.

The protein belongs to the RNA polymerase beta' chain family. In terms of assembly, the RNAP catalytic core consists of 2 alpha, 1 beta, 1 beta' and 1 omega subunit. When a sigma factor is associated with the core the holoenzyme is formed, which can initiate transcription. Requires Mg(2+) as cofactor. Zn(2+) is required as a cofactor.

It carries out the reaction RNA(n) + a ribonucleoside 5'-triphosphate = RNA(n+1) + diphosphate. DNA-dependent RNA polymerase catalyzes the transcription of DNA into RNA using the four ribonucleoside triphosphates as substrates. The protein is DNA-directed RNA polymerase subunit beta' of Pseudomonas putida (Arthrobacter siderocapsulatus).